Consider the following 257-residue polypeptide: Phosphonates import ATP-binding protein PhnC (257 aa).

An ABC transporter domain is found at I4–L248. G37–S44 contacts ATP.

It belongs to the ABC transporter superfamily. Phosphonates importer (TC 3.A.1.9.1) family. The complex is composed of two ATP-binding proteins (PhnC), two transmembrane proteins (PhnE) and a solute-binding protein (PhnD).

It localises to the cell membrane. The catalysed reaction is phosphonate(out) + ATP + H2O = phosphonate(in) + ADP + phosphate + H(+). Its function is as follows. Part of the ABC transporter complex PhnCDE involved in phosphonates import. Responsible for energy coupling to the transport system. In Staphylococcus haemolyticus (strain JCSC1435), this protein is Phosphonates import ATP-binding protein PhnC.